The primary structure comprises 401 residues: Nicotinate phosphoribosyltransferase (401 aa).

A Phosphohistidine; by autocatalysis modification is found at histidine 221.

This sequence belongs to the NAPRTase family. In terms of processing, transiently phosphorylated on a His residue during the reaction cycle. Phosphorylation strongly increases the affinity for substrates and increases the rate of nicotinate D-ribonucleotide production. Dephosphorylation regenerates the low-affinity form of the enzyme, leading to product release.

The catalysed reaction is nicotinate + 5-phospho-alpha-D-ribose 1-diphosphate + ATP + H2O = nicotinate beta-D-ribonucleotide + ADP + phosphate + diphosphate. Its pathway is cofactor biosynthesis; NAD(+) biosynthesis; nicotinate D-ribonucleotide from nicotinate: step 1/1. Functionally, catalyzes the synthesis of beta-nicotinate D-ribonucleotide from nicotinate and 5-phospho-D-ribose 1-phosphate at the expense of ATP. This chain is Nicotinate phosphoribosyltransferase, found in Erwinia tasmaniensis (strain DSM 17950 / CFBP 7177 / CIP 109463 / NCPPB 4357 / Et1/99).